A 187-amino-acid polypeptide reads, in one-letter code: Large ribosomal subunit protein uL5 (187 aa).

This sequence belongs to the universal ribosomal protein uL5 family. In terms of assembly, part of the 50S ribosomal subunit; part of the 5S rRNA/L5/L18/L25 subcomplex. Contacts the 5S rRNA and the P site tRNA. Forms a bridge to the 30S subunit in the 70S ribosome.

This is one of the proteins that bind and probably mediate the attachment of the 5S RNA into the large ribosomal subunit, where it forms part of the central protuberance. In the 70S ribosome it contacts protein S13 of the 30S subunit (bridge B1b), connecting the 2 subunits; this bridge is implicated in subunit movement. Contacts the P site tRNA; the 5S rRNA and some of its associated proteins might help stabilize positioning of ribosome-bound tRNAs. In Corynebacterium diphtheriae (strain ATCC 700971 / NCTC 13129 / Biotype gravis), this protein is Large ribosomal subunit protein uL5.